An 879-amino-acid polypeptide reads, in one-letter code: Prostaglandin F2 receptor negative regulator (879 aa).

The signal sequence occupies residues 1–21 (MGRPAPRPLLLALLSLAVCRG). Ig-like C2-type domains follow at residues 22–129 (RVVR…ATVQ) and 149–268 (PSSR…KAVE). Topologically, residues 22-832 (RVVRVPAGTL…MDVLNAFKYP (811 aa)) are extracellular. 2 disulfides stabilise this stretch: Cys-43/Cys-119 and Cys-169/Cys-247. A glycan (N-linked (GlcNAc...) asparagine) is linked at Asn-44. Residues 89-91 (RGD) carry the Cell attachment site motif. Phosphothreonine is present on Thr-271. Ig-like C2-type domains are found at residues 276–389 (PTAL…WHKV), 406–527 (PEYQ…RNSS), 544–662 (ASED…AWSP), and 688–813 (PIFN…AEIH). Cys-299 and Cys-373 form a disulfide bridge. N-linked (GlcNAc...) asparagine glycans are attached at residues Asn-300, Asn-383, and Asn-413. The short motif at 424-427 (PTEL) is the Endoplasmic reticulum retention signal element. Cysteines 429 and 515 form a disulfide. N-linked (GlcNAc...) asparagine glycans are attached at residues Asn-525, Asn-600, Asn-618, and Asn-691. Cys-571 and Cys-655 are disulfide-bonded. Positions 703–705 (RGD) match the Cell attachment site motif. A disulfide bridge connects residues Cys-711 and Cys-793. A helical membrane pass occupies residues 833–853 (LLIGVGLSTVIGLLSCLIGYC). Residues 854–879 (SSHWCCKKEVRETRRERRRLMSMEMD) are Cytoplasmic-facing.

Interacts with CD9 and CD81. Part of a complex composed of CD9, CD81 and IGSF8. Also seems to interact with CD63, CD82 and CD151. In terms of tissue distribution, reproductive tissues, lung and heart.

The protein localises to the endoplasmic reticulum membrane. It is found in the golgi apparatus. Its subcellular location is the trans-Golgi network membrane. Functionally, inhibits the binding of prostaglandin F2-alpha (PGF2-alpha) to its specific FP receptor, by decreasing the receptor number rather than the affinity constant. Functional coupling with the prostaglandin F2-alpha receptor seems to occur. In myoblasts, associates with tetraspanins CD9 and CD81 to prevent myotube fusion during muscle regeneration. The sequence is that of Prostaglandin F2 receptor negative regulator (Ptgfrn) from Rattus norvegicus (Rat).